Consider the following 320-residue polypeptide: Malate dehydrogenase (320 aa).

NAD(+) is bound by residues 10–15 and aspartate 34; that span reads GSGMIG. Positions 83 and 89 each coordinate substrate. NAD(+) is bound by residues asparagine 96 and 119 to 121; that span reads ITN. Residues asparagine 121 and arginine 152 each coordinate substrate. Catalysis depends on histidine 176, which acts as the Proton acceptor.

It belongs to the LDH/MDH superfamily. MDH type 3 family.

It carries out the reaction (S)-malate + NAD(+) = oxaloacetate + NADH + H(+). In terms of biological role, catalyzes the reversible oxidation of malate to oxaloacetate. This is Malate dehydrogenase from Brucella suis (strain ATCC 23445 / NCTC 10510).